The primary structure comprises 231 residues: ATP phosphoribosyltransferase (231 aa).

It belongs to the ATP phosphoribosyltransferase family. Short subfamily. In terms of assembly, heteromultimer composed of HisG and HisZ subunits.

It is found in the cytoplasm. It carries out the reaction 1-(5-phospho-beta-D-ribosyl)-ATP + diphosphate = 5-phospho-alpha-D-ribose 1-diphosphate + ATP. It participates in amino-acid biosynthesis; L-histidine biosynthesis; L-histidine from 5-phospho-alpha-D-ribose 1-diphosphate: step 1/9. Its function is as follows. Catalyzes the condensation of ATP and 5-phosphoribose 1-diphosphate to form N'-(5'-phosphoribosyl)-ATP (PR-ATP). Has a crucial role in the pathway because the rate of histidine biosynthesis seems to be controlled primarily by regulation of HisG enzymatic activity. The protein is ATP phosphoribosyltransferase of Sinorhizobium medicae (strain WSM419) (Ensifer medicae).